A 504-amino-acid polypeptide reads, in one-letter code: Maturase K (504 aa).

This sequence belongs to the intron maturase 2 family. MatK subfamily.

It is found in the plastid. The protein resides in the chloroplast. Its function is as follows. Usually encoded in the trnK tRNA gene intron. Probably assists in splicing its own and other chloroplast group II introns. The chain is Maturase K from Vauquelinia californica (Arizona rosewood).